The following is a 320-amino-acid chain: ATP-dependent 6-phosphofructokinase (320 aa).

ATP is bound at residue glycine 12. Residue 22–26 (RGVVR) participates in ADP binding. ATP-binding positions include 73–74 (RF) and 103–106 (GDGS). Aspartate 104 is a binding site for Mg(2+). A substrate-binding site is contributed by 126 to 128 (TID). Aspartate 128 functions as the Proton acceptor in the catalytic mechanism. Arginine 155 contributes to the ADP binding site. Substrate contacts are provided by residues arginine 163 and 170 to 172 (MGR). Residues 186–188 (GCE), lysine 212, and 214–216 (KKH) contribute to the ADP site. Substrate-binding positions include glutamate 223, arginine 244, and 250–253 (HIQR).

It belongs to the phosphofructokinase type A (PFKA) family. ATP-dependent PFK group I subfamily. Prokaryotic clade 'B1' sub-subfamily. Homotetramer. It depends on Mg(2+) as a cofactor.

Its subcellular location is the cytoplasm. It carries out the reaction beta-D-fructose 6-phosphate + ATP = beta-D-fructose 1,6-bisphosphate + ADP + H(+). Its pathway is carbohydrate degradation; glycolysis; D-glyceraldehyde 3-phosphate and glycerone phosphate from D-glucose: step 3/4. Allosterically activated by ADP and other diphosphonucleosides, and allosterically inhibited by phosphoenolpyruvate. In terms of biological role, catalyzes the phosphorylation of D-fructose 6-phosphate to fructose 1,6-bisphosphate by ATP, the first committing step of glycolysis. This is ATP-dependent 6-phosphofructokinase from Photobacterium profundum (strain SS9).